A 264-amino-acid polypeptide reads, in one-letter code: Caffeoyl-CoA O-methyltransferase 2 (264 aa).

Residues Met1–Ala20 show a composition bias toward low complexity. The interval Met1–His37 is disordered. Basic and acidic residues predominate over residues Gln28–His37. Lys38 provides a ligand contact to substrate. Residues Thr80, Glu102, Gly104 to Val105, Ser110, Asp128, and Ala157 each bind S-adenosyl-L-methionine. A substrate-binding site is contributed by Asp180. Asp180 lines the a divalent metal cation pocket. Asp182 serves as a coordination point for S-adenosyl-L-methionine. A divalent metal cation-binding residues include Asp206 and Asn207. Substrate is bound at residue Asn211.

This sequence belongs to the class I-like SAM-binding methyltransferase superfamily. Cation-dependent O-methyltransferase family. CCoAMT subfamily. A divalent metal cation serves as cofactor.

It carries out the reaction (E)-caffeoyl-CoA + S-adenosyl-L-methionine = (E)-feruloyl-CoA + S-adenosyl-L-homocysteine + H(+). It participates in aromatic compound metabolism; phenylpropanoid biosynthesis. Its function is as follows. Methylates caffeoyl-CoA to feruloyl-CoA and 5-hydroxyferuloyl-CoA to sinapoyl-CoA. Plays a role in the synthesis of feruloylated polysaccharides. Involved in the reinforcement of the plant cell wall. Also involved in the responding to wounding or pathogen challenge by the increased formation of cell wall-bound ferulic acid polymers. The sequence is that of Caffeoyl-CoA O-methyltransferase 2 (CCOAOMT2) from Zea mays (Maize).